The chain runs to 343 residues: Glycerol-3-phosphate dehydrogenase [NAD(P)+] (343 aa).

Serine 15, phenylalanine 16, arginine 36, and lysine 110 together coordinate NADPH. Sn-glycerol 3-phosphate-binding residues include lysine 110 and glycine 138. NADPH is bound at residue alanine 142. Residues lysine 193, aspartate 246, serine 256, arginine 257, and asparagine 258 each coordinate sn-glycerol 3-phosphate. The Proton acceptor role is filled by lysine 193. Position 257 (arginine 257) interacts with NADPH. Residue glutamate 283 coordinates NADPH.

The protein belongs to the NAD-dependent glycerol-3-phosphate dehydrogenase family.

The protein localises to the cytoplasm. It catalyses the reaction sn-glycerol 3-phosphate + NAD(+) = dihydroxyacetone phosphate + NADH + H(+). It carries out the reaction sn-glycerol 3-phosphate + NADP(+) = dihydroxyacetone phosphate + NADPH + H(+). It functions in the pathway membrane lipid metabolism; glycerophospholipid metabolism. Its function is as follows. Catalyzes the reduction of the glycolytic intermediate dihydroxyacetone phosphate (DHAP) to sn-glycerol 3-phosphate (G3P), the key precursor for phospholipid synthesis. The chain is Glycerol-3-phosphate dehydrogenase [NAD(P)+] from Alcanivorax borkumensis (strain ATCC 700651 / DSM 11573 / NCIMB 13689 / SK2).